A 515-amino-acid polypeptide reads, in one-letter code: Chromosomal replication initiator protein DnaA (515 aa).

The tract at residues 1–89 (MVADQAVLSS…LLAISIDANL (89 aa)) is domain I, interacts with DnaA modulators. The segment at 89–172 (LQPPRTPSSE…APPSTSAETS (84 aa)) is domain II. Disordered stretches follow at residues 90 to 130 (QPPR…SRRA) and 142 to 171 (PPADVVPAANAAPNGNGKPTPAPPSTSAET). Low complexity-rich tracts occupy residues 102–114 (SSLAGGPSGAAAP) and 143–160 (PADVVPAANAAPNGNGKP). The interval 173-389 (RLNDRYHFET…GALIRVTAFA (217 aa)) is domain III, AAA+ region. ATP is bound by residues Gly-217, Gly-219, Lys-220, and Thr-221. The tract at residues 390–515 (SLNRQTVDIE…NEIKRKQRGA (126 aa)) is domain IV, binds dsDNA.

It belongs to the DnaA family. In terms of assembly, oligomerizes as a right-handed, spiral filament on DNA at oriC.

Its subcellular location is the cytoplasm. Plays an essential role in the initiation and regulation of chromosomal replication. ATP-DnaA binds to the origin of replication (oriC) to initiate formation of the DNA replication initiation complex once per cell cycle. Binds the DnaA box (a 9 base pair repeat at the origin) and separates the double-stranded (ds)DNA. Forms a right-handed helical filament on oriC DNA; dsDNA binds to the exterior of the filament while single-stranded (ss)DNA is stabiized in the filament's interior. The ATP-DnaA-oriC complex binds and stabilizes one strand of the AT-rich DNA unwinding element (DUE), permitting loading of DNA polymerase. After initiation quickly degrades to an ADP-DnaA complex that is not apt for DNA replication. Binds acidic phospholipids. The sequence is that of Chromosomal replication initiator protein DnaA from Micrococcus luteus (strain ATCC 4698 / DSM 20030 / JCM 1464 / CCM 169 / CCUG 5858 / IAM 1056 / NBRC 3333 / NCIMB 9278 / NCTC 2665 / VKM Ac-2230) (Micrococcus lysodeikticus).